The primary structure comprises 318 residues: Lipoyl synthase 1 (318 aa).

Residues Asp-6–Asp-32 are disordered. [4Fe-4S] cluster-binding residues include Cys-60, Cys-65, Cys-71, Cys-86, Cys-90, Cys-93, and Ser-299. Residues Trp-72 to Leu-288 form the Radical SAM core domain.

This sequence belongs to the radical SAM superfamily. Lipoyl synthase family. The cofactor is [4Fe-4S] cluster.

It localises to the cytoplasm. The catalysed reaction is [[Fe-S] cluster scaffold protein carrying a second [4Fe-4S](2+) cluster] + N(6)-octanoyl-L-lysyl-[protein] + 2 oxidized [2Fe-2S]-[ferredoxin] + 2 S-adenosyl-L-methionine + 4 H(+) = [[Fe-S] cluster scaffold protein] + N(6)-[(R)-dihydrolipoyl]-L-lysyl-[protein] + 4 Fe(3+) + 2 hydrogen sulfide + 2 5'-deoxyadenosine + 2 L-methionine + 2 reduced [2Fe-2S]-[ferredoxin]. It functions in the pathway protein modification; protein lipoylation via endogenous pathway; protein N(6)-(lipoyl)lysine from octanoyl-[acyl-carrier-protein]: step 2/2. Its function is as follows. Catalyzes the radical-mediated insertion of two sulfur atoms into the C-6 and C-8 positions of the octanoyl moiety bound to the lipoyl domains of lipoate-dependent enzymes, thereby converting the octanoylated domains into lipoylated derivatives. In Bradyrhizobium diazoefficiens (strain JCM 10833 / BCRC 13528 / IAM 13628 / NBRC 14792 / USDA 110), this protein is Lipoyl synthase 1.